The primary structure comprises 3289 residues: tRNA nuclease CdiA (3289 aa).

The first 32 residues, 1–32, serve as a signal peptide directing secretion; the sequence is MHQPPVRFTYRLLSYLISTIIAGQPLLPAVGA. The tract at residues 36-322 is two-partner system transport domain (TPS); sequence PQNGAGMDKA…AGGNLSVSSR (287 aa). The segment at 351 to 1398 is FHA-1; sequence EKLTAGRDVT…IVVRTGHLLN (1048 aa). A disordered region spans residues 595 to 615; the sequence is AVNASEKLTHSGKSSAPSLSL. The segment at 1399–1689 is receptor binding domain (RBD); sequence QREGFSATTT…LTGQTGISDD (291 aa). The interval 1690 to 1874 is YP domain; that stretch reads WPLPSGNNGY…LSPEDITLHN (185 aa). A periplasmic FHA-1 repeat (pFR) region spans residues 1875 to 1935; that stretch reads GSVISGNNVQ…DLSAIGDISN (61 aa). Residues 1979–2653 are FHA-2; it reads TDTGPVATIK…TSKYDSKQTS (675 aa). Residues 2097–2113 show a composition bias toward basic and acidic residues; it reads RESKNSRNGRSESHESH. 3 disordered regions span residues 2097–2116, 2332–2356, and 2466–2513; these read RESK…HAAV, GSSK…TIGS, and TGDP…TGKN. 2 stretches are compositionally biased toward polar residues: residues 2344 to 2356 and 2472 to 2507; these read GTTQ…TIGS and TGVS…NLSV. Positions 2992 to 3034 are pretoxin (PT) domain; it reads SDLSEEQKQTISTLATVSAGLAGGLTGNSTASAAVGAQSGKNA. Residues 3035–3038 carry the VENN CT cleavage motif motif; the sequence is VENN. A C-terminal effector domain (CT); has tRNase activity region spans residues 3035 to 3289; the sequence is VENNYLSVSE…VGHIQPVKVK (255 aa). The interval 3039–3197 is inner membrane translocation domain (IMTD), targets protein to PtsG; sequence YLSVSEKTEL…PLIGQAASNK (159 aa).

In the N-terminal section; belongs to the CdiA toxin family. As to quaternary structure, forms a contact-dependent growth inhibition complex of CdiA-CT-NC101, CdiI-NC101 and EF-Tu; the complex is a dimer of heterotrimers. Stable CdiA-CT-NC101, EF-Tu complexes are not detected, nor are complexes with EF-Ts.

The protein resides in the secreted. Its subcellular location is the target cell. The protein localises to the target cell cytoplasm. Its function is as follows. Toxic component of a toxin-immunity protein module, which functions as a cellular contact-dependent growth inhibition (CDI) system. CDI modules allow bacteria to communicate with and inhibit the growth of closely related neighboring bacteria in a contact-dependent fashion (target cell counts decrease about 10,0000-fold for this system). CdiA toxicity is neutralized by its cognate immunity protein CdiI-NC101, but not by CdiI from other bacteria. The C-terminal domain (CT) cleaves tRNA endonucleolytically at the 5' side of guanine discriminator nucleotide sites (removes the last 4 nucleotides of the tRNA acceptor arm when the first nucleotide to be removed is G). Requires EF-Ts (tsf) for toxic function of the CT domain in vivo. In vitro the CT tRNase activity requires both EF-Tu (tufA) and EF-Ts. EF-Ts probably increases steady-state GTP-EF-Tu-aa-tRNA substrate levels. The CT domain is thought to remodel this same complex to displace the 3'-end of the aa-tRNA and allow it to enter into the toxin active site. The CT domain gains access to the cytoplasm of target cells by using integral inner membrane protein PTS system glucose-specific EIICB component (ptsG). The CdiA protein is thought to be exported from the cell through the central lumen of CdiB, the other half of its two-partner system (TPS). The TPS domain probably remains associated with CdiB while the FHA-1 domain forms an extended filament with the receptor-binding domain (RBD) at its extremity; in the secretion arrested state the C-terminus of the RBD and YP domains form a hairpin-like structure as the FHA-2, PT and CT domains are periplasmic. The YP domain is probably responsible for this arrest at the point where it re-enters the host cell periplasm. Upon binding to a target cell outer membrane receptor a signal is transmitted to activate secretion. The filament elongates slightly, the rest of CdiA is secreted and the FHA-2 domain becomes stably associated with the target cell's outer membrane where it facilitates entry of the toxic CT domain into the target cell periplasm. From there the toxic CT domain is cleaved and gains access to the target cell cytoplasm via an inner membrane protein (PtsG for this CDI). In Escherichia coli (strain NC101), this protein is tRNA nuclease CdiA.